We begin with the raw amino-acid sequence, 1409 residues long: DNA-directed RNA polymerase subunit beta' (1409 aa).

C72, C74, C87, and C90 together coordinate Zn(2+). Mg(2+) contacts are provided by D462, D464, and D466. Zn(2+) is bound by residues C816, C890, C897, and C900.

The protein belongs to the RNA polymerase beta' chain family. As to quaternary structure, the RNAP catalytic core consists of 2 alpha, 1 beta, 1 beta' and 1 omega subunit. When a sigma factor is associated with the core the holoenzyme is formed, which can initiate transcription. Requires Mg(2+) as cofactor. Zn(2+) serves as cofactor.

The enzyme catalyses RNA(n) + a ribonucleoside 5'-triphosphate = RNA(n+1) + diphosphate. DNA-dependent RNA polymerase catalyzes the transcription of DNA into RNA using the four ribonucleoside triphosphates as substrates. The chain is DNA-directed RNA polymerase subunit beta' from Aromatoleum aromaticum (strain DSM 19018 / LMG 30748 / EbN1) (Azoarcus sp. (strain EbN1)).